We begin with the raw amino-acid sequence, 217 residues long: Probable transaldolase (217 aa).

The active-site Schiff-base intermediate with substrate is the lysine 83.

Belongs to the transaldolase family. Type 3B subfamily.

Its subcellular location is the cytoplasm. The enzyme catalyses D-sedoheptulose 7-phosphate + D-glyceraldehyde 3-phosphate = D-erythrose 4-phosphate + beta-D-fructose 6-phosphate. Its pathway is carbohydrate degradation; pentose phosphate pathway; D-glyceraldehyde 3-phosphate and beta-D-fructose 6-phosphate from D-ribose 5-phosphate and D-xylulose 5-phosphate (non-oxidative stage): step 2/3. Its function is as follows. Transaldolase is important for the balance of metabolites in the pentose-phosphate pathway. This Erythrobacter litoralis (strain HTCC2594) protein is Probable transaldolase.